The primary structure comprises 376 residues: ATP phosphoribosyltransferase regulatory subunit (376 aa).

This sequence belongs to the class-II aminoacyl-tRNA synthetase family. HisZ subfamily. In terms of assembly, heteromultimer composed of HisG and HisZ subunits.

It localises to the cytoplasm. It participates in amino-acid biosynthesis; L-histidine biosynthesis; L-histidine from 5-phospho-alpha-D-ribose 1-diphosphate: step 1/9. Required for the first step of histidine biosynthesis. May allow the feedback regulation of ATP phosphoribosyltransferase activity by histidine. The sequence is that of ATP phosphoribosyltransferase regulatory subunit from Brucella anthropi (strain ATCC 49188 / DSM 6882 / CCUG 24695 / JCM 21032 / LMG 3331 / NBRC 15819 / NCTC 12168 / Alc 37) (Ochrobactrum anthropi).